The following is a 440-amino-acid chain: MASLKRFQTLVPLDHKQGTLFEIIGEPKLPKWFHVECLEDPKRLYVEPRLLEIMFGKDGEHIPHLESMLHTLIHVNVWGPERRAEIWIFGPPPFRRDVDRMLTDLAHYCRMKLMEIEALEAGVERRRMAAHKAATQPAPVKVREAAPRPASVKVPETATQPAPVKVREAAPQPAPVQEVREAAPQQASVQEEVREAATEQAPVQEVREAATEQAPVQEVSEAATEQAPVQEVNEAATEQASVQAVREAATRPAPGKVRKAATQPAPVQVCQEATQLAPVKVREAATQPASGKVREAATQLAPVKVRKAATQLAPVKVHEAATQPAPGKVSDAATQSASVQVREAATQLSPVEATDTSQLAQVKADEAFAQHTSGEAHQVANGQSPIEVCETATGQHSLDVSRALSQKCPEVFEWETQSCLDGSYVIVQPPRDAWESFIIL.

Positions 1–39 (MASLKRFQTLVPLDHKQGTLFEIIGEPKLPKWFHVECLE) are involved in RNA binding. A KH; atypical domain is found at 40-118 (DPKRLYVEPR…CRMKLMEIEA (79 aa)). The segment at 132 to 201 (KAATQPAPVK…EVREAATEQA (70 aa)) is disordered. Serine 151 carries the phosphoserine; by ATR modification. Residues threonine 274 and threonine 286 each carry the phosphothreonine modification. The required for interaction with NUMA1 and regulation of apoptosis in response to DNA damage stretch occupies residues 341–440 (VREAATQLSP…RDAWESFIIL (100 aa)). Serine 349 carries the post-translational modification Phosphoserine.

This sequence belongs to the KHDC1 family. In terms of assembly, component of the subcortical maternal complex (SCMC), at least composed of NLRP5, KHDC3, OOEP, and TLE6. Within the complex, interacts with NLRP5, OOEP and TLE6. The SCMC may facilitate translocation of its components between the nuclear and cytoplasmic compartments. Forms a scaffold complex with OOEP/FLOPED, and interacts with BLM and TRIM25 at DNA replication forks. Interacts with PARP1; the interaction is increased following the formation of DNA double-strand breaks. Interacts (via C-terminus) with NUMA1. In terms of processing, phosphorylation at Ser-151 is required to promote stalled fork restart. As to expression, detected in ovary, but not in testis or somatic tissues. In the ovary, expressed in growing oocytes.

The protein resides in the cytoplasm. The protein localises to the cell cortex. It is found in the nucleus. Its subcellular location is the mitochondrion. It localises to the cytoskeleton. The protein resides in the microtubule organizing center. The protein localises to the centrosome. It is found in the chromosome. Its function is as follows. Component of the subcortical maternal complex (SCMC), a multiprotein complex that plays a key role in early embryonic development. The SCMC complex is a structural constituent of cytoplasmic lattices, which consist in fibrous structures found in the cytoplasm of oocytes and preimplantation embryos. They are required to store maternal proteins critical for embryonic development, such as proteins that control epigenetic reprogramming of the preimplantation embryo, and prevent their degradation or activation. KHDC3 ensures proper spindle assembly by regulating the localization of AURKA via RHOA signaling and of PLK1 via a RHOA-independent process. Required for the localization of MAD2L1 to kinetochores to enable spindle assembly checkpoint function. As part of the OOEP-KHDC3 scaffold, recruits BLM and TRIM25 to DNA replication forks, thereby promoting the ubiquitination of BLM by TRIM25, enhancing BLM retainment at replication forks and therefore promoting stalled replication fork restart. Regulates homologous recombination-mediated DNA repair via recruitment of RAD51 to sites of DNA double-strand breaks, and sustainment of PARP1 activity, which in turn modulates downstream ATM or ATR activation. Activation of ATM or ATR in response to DNA double-strand breaks may be cell-type specific. Its role in DNA double-strand break repair is independent of its role in restarting stalled replication forks. Promotes neural stem cell neurogenesis and neuronal differentiation in the hippocampus. May regulate normal development of learning, memory and anxiety. Capable of binding RNA. The sequence is that of KH domain-containing protein 3 from Mus musculus (Mouse).